Reading from the N-terminus, the 80-residue chain is MLIPVVCFTCGFPIGTYAAIFDKARTEYIKTKMGGTLPQNIPLDASLQIELKDLITALGIPMRVCCRTHLITTLDYRKYY.

Zn(2+) is bound by residues cysteine 7, cysteine 10, cysteine 65, and cysteine 66.

Belongs to the archaeal RpoN/eukaryotic RPB10 RNA polymerase subunit family. Part of the viral DNA-directed RNA polymerase that consists of 8 polII-like subunits (RPB1, RPB2, RPB3, RPB5, RPB6, RPB7, RPB9, RPB10), a capping enzyme and a termination factor.

Its subcellular location is the host cytoplasm. Component of the DNA-directed RNA polymerase (RNAP) that catalyzes the transcription in the cytoplasm of viral DNA into RNA using the four ribonucleoside triphosphates as substrates. This is DNA-directed RNA polymerase RPB10 homolog from African swine fever virus (isolate Pig/Kenya/KEN-50/1950) (ASFV).